We begin with the raw amino-acid sequence, 355 residues long: Cell surface glycoprotein CD200 receptor 1 (355 aa).

An N-terminal signal peptide occupies residues 1 to 26 (MPCTWITSDLQLRLILTLFFVAECLS). At 27–267 (AGMEGTKTSN…QGAEIPAHLK (241 aa)) the chain is on the extracellular side. The segment covering 35–55 (SNNSMQQLDNGNHSSVSTTSS) has biased composition (polar residues). The tract at residues 35–56 (SNNSMQQLDNGNHSSVSTTSST) is disordered. N-linked (GlcNAc...) asparagine glycosylation is found at N46, N123, and N153. Disulfide bonds link C85-C156, C108-C124, C191-C241, and C210-C229. An Ig-like C2-type domain is found at 139 to 257 (PALQVDPVAI…GNKSLSIQLS (119 aa)). The chain crosses the membrane as a helical span at residues 268-288 (NLYITAPIFIILIVVGSIWLL). The Cytoplasmic segment spans residues 289–355 (KISGCRKCKL…NLHTIYVPRV (67 aa)).

This sequence belongs to the CD200R family. As to quaternary structure, CD200 and CD200R1 interact via their respective N-terminal Ig-like domains.

The protein localises to the cell membrane. In terms of biological role, inhibitory receptor for the CD200/OX2 cell surface glycoprotein. Limits inflammation by inhibiting the expression of pro-inflammatory molecules including TNF-alpha, interferons, and inducible nitric oxide synthase (iNOS) in response to selected stimuli. The protein is Cell surface glycoprotein CD200 receptor 1 (CD200R1) of Bos taurus (Bovine).